The chain runs to 169 residues: Protein AIG2 B (169 aa).

15-20 (YGSFQE) provides a ligand contact to substrate. The active-site Proton acceptor is glutamate 83.

It belongs to the gamma-glutamylcyclotransferase family. In terms of tissue distribution, expressed in roots, leaves and stems.

In terms of biological role, putative gamma-glutamylcyclotransferase. The sequence is that of Protein AIG2 B from Arabidopsis thaliana (Mouse-ear cress).